The following is a 128-amino-acid chain: Large ribosomal subunit protein bL12 (128 aa).

This sequence belongs to the bacterial ribosomal protein bL12 family. In terms of assembly, homodimer. Part of the ribosomal stalk of the 50S ribosomal subunit. Forms a multimeric L10(L12)X complex, where L10 forms an elongated spine to which 2 to 4 L12 dimers bind in a sequential fashion. Binds GTP-bound translation factors.

Functionally, forms part of the ribosomal stalk which helps the ribosome interact with GTP-bound translation factors. Is thus essential for accurate translation. The sequence is that of Large ribosomal subunit protein bL12 from Synechococcus sp. (strain CC9902).